The following is a 197-amino-acid chain: Phosphoheptose isomerase (197 aa).

An SIS domain is found at 36–197 (MVQCLVSEGK…IDQQLFGSTE (162 aa)). Substrate is bound at residue 51-53 (NGG). Positions 60 and 64 each coordinate Zn(2+). Substrate contacts are provided by residues glutamate 64, 93 to 94 (ND), 119 to 121 (STS), serine 124, and glutamine 174. Zn(2+) contacts are provided by glutamine 174 and histidine 182.

It belongs to the SIS family. GmhA subfamily. Homotetramer. It depends on Zn(2+) as a cofactor.

The protein localises to the cytoplasm. The catalysed reaction is 2 D-sedoheptulose 7-phosphate = D-glycero-alpha-D-manno-heptose 7-phosphate + D-glycero-beta-D-manno-heptose 7-phosphate. It functions in the pathway carbohydrate biosynthesis; D-glycero-D-manno-heptose 7-phosphate biosynthesis; D-glycero-alpha-D-manno-heptose 7-phosphate and D-glycero-beta-D-manno-heptose 7-phosphate from sedoheptulose 7-phosphate: step 1/1. Functionally, catalyzes the isomerization of sedoheptulose 7-phosphate in D-glycero-D-manno-heptose 7-phosphate. The protein is Phosphoheptose isomerase of Chromohalobacter salexigens (strain ATCC BAA-138 / DSM 3043 / CIP 106854 / NCIMB 13768 / 1H11).